The primary structure comprises 568 residues: Urease subunit alpha (568 aa).

The region spanning 130-568 is the Urease domain; the sequence is GGIDTHIHFI…LPMAQRYFLF (439 aa). Residues H135, H137, and K218 each contribute to the Ni(2+) site. Residue K218 is modified to N6-carboxylysine. H220 provides a ligand contact to substrate. H247 and H273 together coordinate Ni(2+). The active-site Proton donor is the H321. D361 is a binding site for Ni(2+).

Belongs to the metallo-dependent hydrolases superfamily. Urease alpha subunit family. As to quaternary structure, heterotrimer of UreA (gamma), UreB (beta) and UreC (alpha) subunits. Three heterotrimers associate to form the active enzyme. Ni cation serves as cofactor. Carboxylation allows a single lysine to coordinate two nickel ions.

The protein localises to the cytoplasm. It catalyses the reaction urea + 2 H2O + H(+) = hydrogencarbonate + 2 NH4(+). The protein operates within nitrogen metabolism; urea degradation; CO(2) and NH(3) from urea (urease route): step 1/1. The protein is Urease subunit alpha of Burkholderia pseudomallei (strain 668).